The chain runs to 1063 residues: Kinesin-like protein KIN-7H (1063 aa).

In terms of domain architecture, Kinesin motor spans 18 to 342; the sequence is KIYVSVRMRP…LLFASCAKEV (325 aa). 106 to 113 provides a ligand contact to ATP; that stretch reads GQTSSGKT. Residues 351 to 436 are a coiled coil; sequence VMSDKALVKH…KNQEKETLST (86 aa). The disordered stretch occupies residues 574–664; that stretch reads SDISIGPVEN…ESNLTKNPAL (91 aa).

Belongs to the TRAFAC class myosin-kinesin ATPase superfamily. Kinesin family. KIN-7 subfamily.

In Arabidopsis thaliana (Mouse-ear cress), this protein is Kinesin-like protein KIN-7H.